We begin with the raw amino-acid sequence, 540 residues long: Zona pellucida sperm-binding protein 4 (540 aa).

A signal peptide spans 1-24; that stretch reads MAPGSTMWLLGYIFLCFPVSFALI. At 25-515 the chain is on the extracellular side; the sequence is KQPKPETPTD…SGVPVHPGAL (491 aa). Residues Asn-76 and Asn-97 are each glycosylated (N-linked (GlcNAc...) asparagine). The 43-residue stretch at 145–187 folds into the P-type domain; the sequence is GLCDSVPVQDRLPCATAPISQEDCEELGCCHSSEEVNACYYGN. Residues 192 to 470 form the ZP domain; it reads HCTQEGHFSI…VTCPIDSRRR (279 aa). Asn-206 and Asn-223 each carry an N-linked (GlcNAc...) asparagine glycan. An O-linked (GalNAc...) serine glycan is attached at Ser-296. An O-linked (GalNAc...) threonine glycan is attached at Thr-306. A disulfide bond links Cys-371 and Cys-446. A propeptide spans 467 to 540 (removed in mature form); it reads SRRRNSDINF…VSYVAIRTRR (74 aa). N-linked (GlcNAc...) asparagine glycans are attached at residues Asn-478 and Asn-482. A helical transmembrane segment spans residues 516–536; it reads WVAGLSGIFIIGALLVSYVAI. Residues 537–540 lie on the Cytoplasmic side of the membrane; it reads RTRR.

The protein belongs to the ZP domain family. ZPB subfamily. Proteolytically cleaved before the transmembrane segment to yield the secreted ectodomain incorporated in the zona pellucida. In terms of tissue distribution, expressed in oocytes (at protein level).

Its subcellular location is the zona pellucida. The protein localises to the cell membrane. Functionally, component of the zona pellucida, an extracellular matrix surrounding oocytes which mediates sperm binding, induction of the acrosome reaction and prevents post-fertilization polyspermy. The zona pellucida is composed of 3 to 4 glycoproteins, ZP1, ZP2, ZP3, and ZP4. ZP4 may act as a sperm receptor. This is Zona pellucida sperm-binding protein 4 (ZP4) from Oryctolagus cuniculus (Rabbit).